The following is a 291-amino-acid chain: Homeobox protein knotted-1-like 7 (291 aa).

The 21-residue stretch at Glu194–Ile214 folds into the ELK domain. The homeobox; TALE-type DNA-binding region spans Met215–Asn278.

The protein belongs to the TALE/KNOX homeobox family. May form heterodimeric complex with the TALE/BELL proteins. Interacts with OFP1, OFP2, OFP3, OFP4 and OFP6.

The protein resides in the nucleus. May be involved in secondary cell wall biosynthesis. The sequence is that of Homeobox protein knotted-1-like 7 (KNAT7) from Arabidopsis thaliana (Mouse-ear cress).